A 271-amino-acid chain; its full sequence is Octanoyltransferase LipM (271 aa).

The BPL/LPL catalytic domain occupies Gly-31–Phe-242. Cys-144 functions as the Acyl-thioester intermediate in the catalytic mechanism.

It belongs to the octanoyltransferase LipM family. As to quaternary structure, monomer.

The enzyme catalyses octanoyl-[ACP] + L-lysyl-[protein] = N(6)-octanoyl-L-lysyl-[protein] + holo-[ACP] + H(+). The protein operates within protein modification; protein lipoylation via endogenous pathway; protein N(6)-(lipoyl)lysine from octanoyl-[acyl-carrier-protein]. Its function is as follows. Catalyzes the transfer of endogenously produced octanoic acid from octanoyl-acyl-carrier-protein onto the lipoyl domain of GcvH, an intermediate carrier during protein lipoylation. The polypeptide is Octanoyltransferase LipM (Clostridioides difficile (strain 630) (Peptoclostridium difficile)).